Reading from the N-terminus, the 527-residue chain is Glucose-6-phosphate isomerase (527 aa).

The active-site Proton donor is Glu-323. Residues His-352 and Lys-454 contribute to the active site.

This sequence belongs to the GPI family.

The protein localises to the cytoplasm. It catalyses the reaction alpha-D-glucose 6-phosphate = beta-D-fructose 6-phosphate. It functions in the pathway carbohydrate biosynthesis; gluconeogenesis. Its pathway is carbohydrate degradation; glycolysis; D-glyceraldehyde 3-phosphate and glycerone phosphate from D-glucose: step 2/4. Functionally, catalyzes the reversible isomerization of glucose-6-phosphate to fructose-6-phosphate. The chain is Glucose-6-phosphate isomerase from Prochlorococcus marinus (strain MIT 9215).